The sequence spans 405 residues: uncharacterized protein (405 aa).

Disordered stretches follow at residues 1–21, 150–179, and 285–405; these read MSKK…ESKT, IKDE…QEGP, and DDED…KSRS. Residues 7–16 show a composition bias toward polar residues; it reads KNASPKNNSD. Composition is skewed to acidic residues over residues 312-331 and 349-358; these read SDDE…DDEE and DDEDDEEEGE. Basic residues-rich tracts occupy residues 365–374 and 390–405; these read SSKKSSKKAS and PKKK…KSRS.

This is an uncharacterized protein from Acanthamoeba polyphaga (Amoeba).